A 211-amino-acid polypeptide reads, in one-letter code: MMDTFSCNSYEQNHPHDDDIDIDAHDHDSHGGDHQEESGWTTYLDDFSNQYRTTHHEENDHQDKSSYSLLATSTSLVSDAATHAFSGKSFPVNFPAKLKFGRGRTKKICEDDSLEDTASSPVNSPKVSHFEHIQTPPRKIEDYVSSSFVMGNIRGMGDHQIQIQEGGEQKVTLMRNLIDGNNNNNNNNMDLRSRGLCVVPISMLANFNGRC.

Residues 1–12 (MMDTFSCNSYEQ) are compositionally biased toward polar residues. The disordered stretch occupies residues 1 to 40 (MMDTFSCNSYEQNHPHDDDIDIDAHDHDSHGGDHQEESGW). Residues 13–37 (NHPHDDDIDIDAHDHDSHGGDHQEE) are compositionally biased toward basic and acidic residues.

As to expression, expressed in vascular tissues of cotyledons, rosette leaves, sepals, petals, anther filaments. Expressed in roots, inflorescence stems and developing seeds.

It localises to the cytoplasm. The protein resides in the nucleus. In terms of biological role, involved in the regulation of xylem development and growth. May regulate secondary wall formation during vascular development by modulation of brassinosteroid, gibberellin and auxin hormone signaling pathways. This is Vascular-related unknown protein 1 from Arabidopsis thaliana (Mouse-ear cress).